Reading from the N-terminus, the 425-residue chain is Glutamyl-tRNA reductase (425 aa).

Substrate contacts are provided by residues 49–52 (TCNR), S109, 114–116 (EGQ), and Q120. The Nucleophile role is filled by C50. 189–194 (GAGETG) provides a ligand contact to NADP(+).

This sequence belongs to the glutamyl-tRNA reductase family. In terms of assembly, homodimer.

The catalysed reaction is (S)-4-amino-5-oxopentanoate + tRNA(Glu) + NADP(+) = L-glutamyl-tRNA(Glu) + NADPH + H(+). It functions in the pathway porphyrin-containing compound metabolism; protoporphyrin-IX biosynthesis; 5-aminolevulinate from L-glutamyl-tRNA(Glu): step 1/2. It participates in porphyrin-containing compound metabolism; chlorophyll biosynthesis. In terms of biological role, catalyzes the NADPH-dependent reduction of glutamyl-tRNA(Glu) to glutamate 1-semialdehyde (GSA). This chain is Glutamyl-tRNA reductase, found in Chlorobium luteolum (strain DSM 273 / BCRC 81028 / 2530) (Pelodictyon luteolum).